The primary structure comprises 207 residues: Low-molecular weight cobalt-containing nitrile hydratase subunit alpha (207 aa).

Cysteine 109, cysteine 112, serine 113, and cysteine 114 together coordinate Co(3+).

This sequence belongs to the nitrile hydratase subunit alpha family. As to quaternary structure, heterodimer of an alpha and a beta chain. Co(3+) is required as a cofactor.

It catalyses the reaction an aliphatic primary amide = an aliphatic nitrile + H2O. NHase catalyzes the hydration of various nitrile compounds to the corresponding amides. The polypeptide is Low-molecular weight cobalt-containing nitrile hydratase subunit alpha (Rhodococcus rhodochrous).